The chain runs to 101 residues: Aspartyl/glutamyl-tRNA(Asn/Gln) amidotransferase subunit C (101 aa).

Belongs to the GatC family. In terms of assembly, heterotrimer of A, B and C subunits.

The enzyme catalyses L-glutamyl-tRNA(Gln) + L-glutamine + ATP + H2O = L-glutaminyl-tRNA(Gln) + L-glutamate + ADP + phosphate + H(+). It catalyses the reaction L-aspartyl-tRNA(Asn) + L-glutamine + ATP + H2O = L-asparaginyl-tRNA(Asn) + L-glutamate + ADP + phosphate + 2 H(+). Its function is as follows. Allows the formation of correctly charged Asn-tRNA(Asn) or Gln-tRNA(Gln) through the transamidation of misacylated Asp-tRNA(Asn) or Glu-tRNA(Gln) in organisms which lack either or both of asparaginyl-tRNA or glutaminyl-tRNA synthetases. The reaction takes place in the presence of glutamine and ATP through an activated phospho-Asp-tRNA(Asn) or phospho-Glu-tRNA(Gln). The sequence is that of Aspartyl/glutamyl-tRNA(Asn/Gln) amidotransferase subunit C from Salinispora tropica (strain ATCC BAA-916 / DSM 44818 / JCM 13857 / NBRC 105044 / CNB-440).